Here is a 270-residue protein sequence, read N- to C-terminus: Hydroxyethylthiazole kinase (270 aa).

M44 serves as a coordination point for substrate. ATP contacts are provided by R119 and T165. Residue G192 coordinates substrate.

Belongs to the Thz kinase family. Mg(2+) is required as a cofactor.

It catalyses the reaction 5-(2-hydroxyethyl)-4-methylthiazole + ATP = 4-methyl-5-(2-phosphooxyethyl)-thiazole + ADP + H(+). It functions in the pathway cofactor biosynthesis; thiamine diphosphate biosynthesis; 4-methyl-5-(2-phosphoethyl)-thiazole from 5-(2-hydroxyethyl)-4-methylthiazole: step 1/1. Functionally, catalyzes the phosphorylation of the hydroxyl group of 4-methyl-5-beta-hydroxyethylthiazole (THZ). The chain is Hydroxyethylthiazole kinase from Corynebacterium efficiens (strain DSM 44549 / YS-314 / AJ 12310 / JCM 11189 / NBRC 100395).